Reading from the N-terminus, the 383-residue chain is Xylose/arabinose import ATP-binding protein XacJ (383 aa).

The 232-residue stretch at 4-235 (IQLTDLTKRF…PNNLFVAEFI (232 aa)) folds into the ABC transporter domain. 36 to 43 (GPSGCGKS) is an ATP binding site.

Belongs to the ABC transporter superfamily. Carbohydrate uptake transporter-1 (CUT1) (TC 3.A.1.1) family. As to quaternary structure, the complex is composed of two ATP-binding proteins (XacJ and XacK), two transmembrane proteins (XacH and XacI) and a solute-binding protein (XacG).

It localises to the cell membrane. It carries out the reaction D-xylose(out) + ATP + H2O = D-xylose(in) + ADP + phosphate + H(+). The enzyme catalyses L-arabinose(out) + ATP + H2O = L-arabinose(in) + ADP + phosphate + H(+). Its function is as follows. Part of the ABC transporter complex XacGHIJK involved in the uptake of xylose and arabinose. Responsible for energy coupling to the transport system. The polypeptide is Xylose/arabinose import ATP-binding protein XacJ (Haloferax volcanii (strain ATCC 29605 / DSM 3757 / JCM 8879 / NBRC 14742 / NCIMB 2012 / VKM B-1768 / DS2) (Halobacterium volcanii)).